We begin with the raw amino-acid sequence, 345 residues long: Beta-ketoacyl-[acyl-carrier-protein] synthase III (345 aa).

Residues Cys-114 and His-272 contribute to the active site. Residues 273–277 (QANQR) form an ACP-binding region. Asn-302 is an active-site residue.

This sequence belongs to the thiolase-like superfamily. FabH family. Homodimer.

It localises to the cytoplasm. The enzyme catalyses malonyl-[ACP] + acetyl-CoA + H(+) = 3-oxobutanoyl-[ACP] + CO2 + CoA. It functions in the pathway lipid metabolism; fatty acid biosynthesis. Catalyzes the condensation reaction of fatty acid synthesis by the addition to an acyl acceptor of two carbons from malonyl-ACP. Catalyzes the first condensation reaction which initiates fatty acid synthesis and may therefore play a role in governing the total rate of fatty acid production. Possesses both acetoacetyl-ACP synthase and acetyl transacylase activities. Its substrate specificity determines the biosynthesis of branched-chain and/or straight-chain of fatty acids. In Rhodopirellula baltica (strain DSM 10527 / NCIMB 13988 / SH1), this protein is Beta-ketoacyl-[acyl-carrier-protein] synthase III.